The sequence spans 356 residues: MTIQANVPTGDETSDEASRQTSNEASSEILETARQQVLENGVGLTQAQLEEFLRLPDEALPAALQLAHEVRLKHCGEDVEVEGIISIKTGGCPEDCHFCSQSGLFDSPVRGVWLDIPELVKAAKETAATGATEFCIVAAVRCPDIKLMNQIKFAIDRINEAVDINIACSLGMLTQRQVDQLAEWGVHRYNHNLETARSYFPEVVTTHSYEERLETCNMVKAAGMELCCGALIGMGETLEQRAELAAQLAALEPHEVPLNFLNPRPGTPLENQGIMDGKDALRAIAAFRLAMPRTVLRYAGGRELTLGDLGTREGLLGGINAVIVGNYLTTLGRPATADLSLLVELNMPIKELQKTL.

The segment at 1-28 (MTIQANVPTGDETSDEASRQTSNEASSE) is disordered. One can recognise a Radical SAM core domain in the interval 77-302 (EDVEVEGIIS…RTVLRYAGGR (226 aa)). 3 residues coordinate [4Fe-4S] cluster: cysteine 92, cysteine 96, and cysteine 99. Cysteine 135, cysteine 168, cysteine 227, and arginine 297 together coordinate [2Fe-2S] cluster.

Belongs to the radical SAM superfamily. Biotin synthase family. In terms of assembly, homodimer. The cofactor is [4Fe-4S] cluster. Requires [2Fe-2S] cluster as cofactor.

It carries out the reaction (4R,5S)-dethiobiotin + (sulfur carrier)-SH + 2 reduced [2Fe-2S]-[ferredoxin] + 2 S-adenosyl-L-methionine = (sulfur carrier)-H + biotin + 2 5'-deoxyadenosine + 2 L-methionine + 2 oxidized [2Fe-2S]-[ferredoxin]. It participates in cofactor biosynthesis; biotin biosynthesis; biotin from 7,8-diaminononanoate: step 2/2. Its function is as follows. Catalyzes the conversion of dethiobiotin (DTB) to biotin by the insertion of a sulfur atom into dethiobiotin via a radical-based mechanism. This chain is Biotin synthase, found in Arthrobacter sp. (strain FB24).